The following is a 99-amino-acid chain: Aspartyl/glutamyl-tRNA(Asn/Gln) amidotransferase subunit C (99 aa).

The protein belongs to the GatC family. As to quaternary structure, heterotrimer of A, B and C subunits.

It catalyses the reaction L-glutamyl-tRNA(Gln) + L-glutamine + ATP + H2O = L-glutaminyl-tRNA(Gln) + L-glutamate + ADP + phosphate + H(+). The catalysed reaction is L-aspartyl-tRNA(Asn) + L-glutamine + ATP + H2O = L-asparaginyl-tRNA(Asn) + L-glutamate + ADP + phosphate + 2 H(+). Functionally, allows the formation of correctly charged Asn-tRNA(Asn) or Gln-tRNA(Gln) through the transamidation of misacylated Asp-tRNA(Asn) or Glu-tRNA(Gln) in organisms which lack either or both of asparaginyl-tRNA or glutaminyl-tRNA synthetases. The reaction takes place in the presence of glutamine and ATP through an activated phospho-Asp-tRNA(Asn) or phospho-Glu-tRNA(Gln). This Cupriavidus necator (strain ATCC 17699 / DSM 428 / KCTC 22496 / NCIMB 10442 / H16 / Stanier 337) (Ralstonia eutropha) protein is Aspartyl/glutamyl-tRNA(Asn/Gln) amidotransferase subunit C.